The primary structure comprises 257 residues: Imidazole glycerol phosphate synthase subunit HisF (257 aa).

Residues aspartate 11 and aspartate 130 contribute to the active site.

The protein belongs to the HisA/HisF family. As to quaternary structure, heterodimer of HisH and HisF.

The protein localises to the cytoplasm. It catalyses the reaction 5-[(5-phospho-1-deoxy-D-ribulos-1-ylimino)methylamino]-1-(5-phospho-beta-D-ribosyl)imidazole-4-carboxamide + L-glutamine = D-erythro-1-(imidazol-4-yl)glycerol 3-phosphate + 5-amino-1-(5-phospho-beta-D-ribosyl)imidazole-4-carboxamide + L-glutamate + H(+). Its pathway is amino-acid biosynthesis; L-histidine biosynthesis; L-histidine from 5-phospho-alpha-D-ribose 1-diphosphate: step 5/9. In terms of biological role, IGPS catalyzes the conversion of PRFAR and glutamine to IGP, AICAR and glutamate. The HisF subunit catalyzes the cyclization activity that produces IGP and AICAR from PRFAR using the ammonia provided by the HisH subunit. This is Imidazole glycerol phosphate synthase subunit HisF from Proteus mirabilis (strain HI4320).